Reading from the N-terminus, the 138-residue chain is Flagellar assembly factor FliW (138 aa).

This sequence belongs to the FliW family. In terms of assembly, interacts with translational regulator CsrA and flagellin(s).

It localises to the cytoplasm. Its function is as follows. Acts as an anti-CsrA protein, binds CsrA and prevents it from repressing translation of its target genes, one of which is flagellin. Binds to flagellin and participates in the assembly of the flagellum. The chain is Flagellar assembly factor FliW from Symbiobacterium thermophilum (strain DSM 24528 / JCM 14929 / IAM 14863 / T).